Consider the following 330-residue polypeptide: Putative protein N-methyltransferase FAM86B1 (330 aa).

S-adenosyl-L-methionine-binding positions include W139, 165–167 (GSG), W228, and A247.

It belongs to the class I-like SAM-binding methyltransferase superfamily. EEF2KMT family.

The polypeptide is Putative protein N-methyltransferase FAM86B1 (Homo sapiens (Human)).